Here is a 285-residue protein sequence, read N- to C-terminus: HTH-type transcriptional regulator MurR (285 aa).

Residues methionine 1–serine 77 enclose the HTH rpiR-type domain. Positions serine 37–glutamine 56 form a DNA-binding region, H-T-H motif. The SIS domain maps to isoleucine 128–glutamate 279.

In terms of assembly, homotetramer.

The protein operates within amino-sugar metabolism; N-acetylmuramate degradation [regulation]. Represses the expression of the murPQ operon involved in the uptake and degradation of N-acetylmuramic acid (MurNAc). Binds to two adjacent inverted repeats within the operator region. MurNAc 6-phosphate, the substrate of MurQ, is the specific inducer that weakens binding of MurR to the operator. The sequence is that of HTH-type transcriptional regulator MurR from Shigella boydii serotype 4 (strain Sb227).